Consider the following 938-residue polypeptide: Isoleucine--tRNA ligase (938 aa).

Residues 58-68 (PYANGHLHMGH) carry the 'HIGH' region motif. Glu-566 is an L-isoleucyl-5'-AMP binding site. The 'KMSKS' region signature appears at 607–611 (KMSKS). Lys-610 serves as a coordination point for ATP. Positions 906, 909, 926, and 929 each coordinate Zn(2+).

It belongs to the class-I aminoacyl-tRNA synthetase family. IleS type 1 subfamily. In terms of assembly, monomer. It depends on Zn(2+) as a cofactor.

The protein localises to the cytoplasm. It carries out the reaction tRNA(Ile) + L-isoleucine + ATP = L-isoleucyl-tRNA(Ile) + AMP + diphosphate. Its function is as follows. Catalyzes the attachment of isoleucine to tRNA(Ile). As IleRS can inadvertently accommodate and process structurally similar amino acids such as valine, to avoid such errors it has two additional distinct tRNA(Ile)-dependent editing activities. One activity is designated as 'pretransfer' editing and involves the hydrolysis of activated Val-AMP. The other activity is designated 'posttransfer' editing and involves deacylation of mischarged Val-tRNA(Ile). The polypeptide is Isoleucine--tRNA ligase (Desulfovibrio desulfuricans (strain ATCC 27774 / DSM 6949 / MB)).